The primary structure comprises 109 residues: Parvalbumin-7 (109 aa).

Ala-2 carries the N-acetylalanine modification. 2 consecutive EF-hand domains span residues 39 to 74 (LSAD…FSAD) and 78 to 109 (LTDK…LVHE). Ca(2+) contacts are provided by Asp-52, Asp-54, Ser-56, Phe-58, Glu-60, Glu-63, Asp-91, Asp-93, Asp-95, Lys-97, and Glu-102.

This sequence belongs to the parvalbumin family.

In terms of biological role, in muscle, parvalbumin is thought to be involved in relaxation after contraction. It binds two calcium ions. This Danio rerio (Zebrafish) protein is Parvalbumin-7 (pvalb7).